Here is a 282-residue protein sequence, read N- to C-terminus: 3-methyl-2-oxobutanoate hydroxymethyltransferase (282 aa).

Mg(2+)-binding residues include D44 and D83. 3-methyl-2-oxobutanoate-binding positions include 44–45, D83, and K113; that span reads DS. E115 provides a ligand contact to Mg(2+). E182 (proton acceptor) is an active-site residue.

It belongs to the PanB family. As to quaternary structure, homodecamer; pentamer of dimers. Mg(2+) serves as cofactor.

It localises to the cytoplasm. The enzyme catalyses 3-methyl-2-oxobutanoate + (6R)-5,10-methylene-5,6,7,8-tetrahydrofolate + H2O = 2-dehydropantoate + (6S)-5,6,7,8-tetrahydrofolate. It functions in the pathway cofactor biosynthesis; (R)-pantothenate biosynthesis; (R)-pantoate from 3-methyl-2-oxobutanoate: step 1/2. In terms of biological role, catalyzes the reversible reaction in which hydroxymethyl group from 5,10-methylenetetrahydrofolate is transferred onto alpha-ketoisovalerate to form ketopantoate. This chain is 3-methyl-2-oxobutanoate hydroxymethyltransferase, found in Dehalococcoides mccartyi (strain ATCC BAA-2266 / KCTC 15142 / 195) (Dehalococcoides ethenogenes (strain 195)).